Consider the following 433-residue polypeptide: MTDILNYTKSEEIFSAAQELMPGGVSSPVRAFKSVGGQPIVFDRVKGPFAWDIDGNRYIDYIGSWGPAICGHAHPEVITALHEAIEKGTSFGAPCVLENKLAEMVIDAVPSVEMVRFVNSGTEACMAVLRLMRAFTGRDKVIKFDGCYHGHADMFLVKAGSGVATLGLPDSPGVPRTTTANTLTAPYNDLEAVKKLFSENPDAISGVILEPIVGNAGFITPEPGFLEGLRELTTENGSLLVFDEVMTGFRISYGGAQEKFGVTPDLTTLGKVIGGGLPVGAYGGKKEIMSMVAPAGPVYQAGTLSGNPLAMTAGIKTLELLKQEGTYDKLDSLTSRLIEGIIQSAENNGIAINGGSVSAMFGFFLCDGPVRNFNEAKTNDAELFGKLHREMLRRGIYLAPSPFEAGFTSLAHSEEEIDKTIEAFDESFNEIKK.

K271 carries the post-translational modification N6-(pyridoxal phosphate)lysine.

It belongs to the class-III pyridoxal-phosphate-dependent aminotransferase family. HemL subfamily. Homodimer. The cofactor is pyridoxal 5'-phosphate.

Its subcellular location is the cytoplasm. The catalysed reaction is (S)-4-amino-5-oxopentanoate = 5-aminolevulinate. It participates in porphyrin-containing compound metabolism; protoporphyrin-IX biosynthesis; 5-aminolevulinate from L-glutamyl-tRNA(Glu): step 2/2. Its pathway is porphyrin-containing compound metabolism; chlorophyll biosynthesis. The polypeptide is Glutamate-1-semialdehyde 2,1-aminomutase (Prochlorococcus marinus (strain MIT 9301)).